Reading from the N-terminus, the 125-residue chain is Desulfoferrodoxin homolog (125 aa).

9 residues coordinate Fe cation: Cys-10, Cys-13, Cys-29, Cys-30, His-49, His-69, His-75, Cys-116, and His-119.

Belongs to the desulfoferrodoxin family. Requires Fe(3+) as cofactor. Cu(2+) is required as a cofactor.

This is Desulfoferrodoxin homolog from Archaeoglobus fulgidus (strain ATCC 49558 / DSM 4304 / JCM 9628 / NBRC 100126 / VC-16).